The chain runs to 349 residues: D-arabinose 1-dehydrogenase (NADP(+)) (349 aa).

Zn(2+) contacts are provided by Cys46, His70, Asp99, Cys102, Cys105, Cys113, and Asp155.

This sequence belongs to the zinc-containing alcohol dehydrogenase family. In terms of assembly, homotetramer. Dimer of dimers. Zn(2+) serves as cofactor.

The catalysed reaction is D-arabinose + NADP(+) = D-arabinono-1,4-lactone + NADPH + H(+). Participates in a pentose oxidation pathway that converts D-arabinose to 2-oxoglutarate. Catalyzes the NADP-dependent conversion of D-arabinose to D-arabinono-1,4-lactone. In vitro, can also use L-fucose, L-galactose and D-ribose. Shows highest activity with L-fucose, in combinaison with NAD, and lower activity toward L-galactose and D-ribose. When acting on its physiological substrate, D-arabinose, shows a clear preference for NADP over NAD. This is D-arabinose 1-dehydrogenase (NADP(+)) from Saccharolobus solfataricus (strain ATCC 35092 / DSM 1617 / JCM 11322 / P2) (Sulfolobus solfataricus).